The chain runs to 324 residues: MDQSNMTSFAEEKAMNTSSRNASLGTSHPPIPIVHWVIMSISPLGFVENGILLWFLCFRMRRNPFTVYITHLSIADISLLFCIFILSIDYALDYELSSGHYYTIVTLSVTFLFGYNTGLYLLTAISVERCLSVLYPIWYRCHRPKHQSAFVCALLWALSCLVTTMEYVMCIDSGEESHSQSDCRAVIIFIAILSFLVFTPLMLVSSTILVVKIRKNTWASHSSKLYIVIMVTIIIFLIFAMPMRVLYLLYYEYWSTFGNLHNISLLFSTINSSANPFIYFFVGSSKKKRFRESLKVVLTRAFKDEMQPRRQEGNGNTVSIETVV.

The Extracellular segment spans residues 1–35 (MDQSNMTSFAEEKAMNTSSRNASLGTSHPPIPIVH). Asn5, Asn16, and Asn21 each carry an N-linked (GlcNAc...) asparagine glycan. A helical transmembrane segment spans residues 36 to 60 (WVIMSISPLGFVENGILLWFLCFRM). Residues 61–64 (RRNP) are Cytoplasmic-facing. Residues 65–86 (FTVYITHLSIADISLLFCIFIL) form a helical membrane-spanning segment. Residues 87 to 103 (SIDYALDYELSSGHYYT) are Extracellular-facing. A helical transmembrane segment spans residues 104-127 (IVTLSVTFLFGYNTGLYLLTAISV). Residues 128 to 148 (ERCLSVLYPIWYRCHRPKHQS) are Cytoplasmic-facing. The chain crosses the membrane as a helical span at residues 149–171 (AFVCALLWALSCLVTTMEYVMCI). The Extracellular segment spans residues 172-184 (DSGEESHSQSDCR). A helical transmembrane segment spans residues 185 to 205 (AVIIFIAILSFLVFTPLMLVS). Residues 206 to 223 (STILVVKIRKNTWASHSS) lie on the Cytoplasmic side of the membrane. Residues 224-244 (KLYIVIMVTIIIFLIFAMPMR) form a helical membrane-spanning segment. The Extracellular segment spans residues 245–262 (VLYLLYYEYWSTFGNLHN). Residues 263 to 283 (ISLLFSTINSSANPFIYFFVG) form a helical membrane-spanning segment. Residues 284–324 (SSKKKRFRESLKVVLTRAFKDEMQPRRQEGNGNTVSIETVV) are Cytoplasmic-facing.

This sequence belongs to the G-protein coupled receptor 1 family. As to quaternary structure, interacts with AGTR1. Interacts with FLNA (via filamin repeat 21); increases PKA-mediated phosphorylation of FLNA. Expressed in platelets.

The protein localises to the cell membrane. In terms of biological role, receptor for angiotensin 1-7. Acts specifically as a functional antagonist of AGTR1 (angiotensin-2 type 1 receptor), although it up-regulates AGTR1 receptor levels. Positive regulation of AGTR1 levels occurs through activation of the G-proteins GNA11 and GNAQ, and stimulation of the protein kinase C signaling cascade. The antagonist effect on AGTR1 function is probably due to AGTR1 being physically altered by MAS1. This chain is Proto-oncogene Mas (Mas1), found in Rattus norvegicus (Rat).